The primary structure comprises 454 residues: MRSDTREEISAALDAYHASLSRVLDLKCDALTTPELLACLQRLEVERRRQGAAEHALINQLAGQACEEELGGTLRTALANRLHITPGEASRRIAEAEDLGERRALTGEPLPAQLTATAAAQREGKIGREHIKEIQAFFKELSAAVDLGIREAAEAQLAELATSRRPDHLHGLATQLMDWLHPDGNFSDQERARKRGITMGKQEFDGMSRISGLLTPELRATIEAVLAKLAAPGACNPDDQTPVVDDTPDADAVRRDTRSQAQRHHDGLLAGLRGLLASGELGQHRGLPVTVVVSTTLKELEAATGKGVTGGGSRVPMSDLIRMASNAHHYLALFDGAKPLALYHTKRLASPAQRIMLYAKDRGCSRPGCDAPAYHSEVHHVTPWTTTHRTDINDLTLACGPDNRLVEKGWKTRKNAKGDTEWLPPAHLDHGQPRINRYHHPEKILCEPDDDEPH.

The 42-residue stretch at 364–405 (CSRPGCDAPAYHSEVHHVTPWTTTHRTDINDLTLACGPDNRL) folds into the HNH domain. The segment at 415 to 434 (NAKGDTEWLPPAHLDHGQPR) is disordered.

Belongs to the Rv1128c/1148c/1588c/1702c/1945/3466 family.

This is an uncharacterized protein from Mycobacterium tuberculosis (strain CDC 1551 / Oshkosh).